The chain runs to 459 residues: Ribulose bisphosphate carboxylase large chain (459 aa).

Positions 1 to 2 (MS) are excised as a propeptide. Pro3 carries the N-acetylproline modification. The residue at position 14 (Lys14) is an N6,N6,N6-trimethyllysine. Substrate contacts are provided by Asn123 and Thr173. Catalysis depends on Lys175, which acts as the Proton acceptor. Substrate is bound at residue Lys177. The Mg(2+) site is built by Lys201, Asp203, and Glu204. Lys201 carries the N6-carboxylysine modification. The Proton acceptor role is filled by His294. Arg295, His327, and Ser379 together coordinate substrate.

It belongs to the RuBisCO large chain family. Type I subfamily. As to quaternary structure, heterohexadecamer of 8 large chains and 8 small chains; disulfide-linked. The disulfide link is formed within the large subunit homodimers. The cofactor is Mg(2+). The disulfide bond which can form in the large chain dimeric partners within the hexadecamer appears to be associated with oxidative stress and protein turnover.

It localises to the plastid. Its subcellular location is the chloroplast. The enzyme catalyses 2 (2R)-3-phosphoglycerate + 2 H(+) = D-ribulose 1,5-bisphosphate + CO2 + H2O. It catalyses the reaction D-ribulose 1,5-bisphosphate + O2 = 2-phosphoglycolate + (2R)-3-phosphoglycerate + 2 H(+). Functionally, ruBisCO catalyzes two reactions: the carboxylation of D-ribulose 1,5-bisphosphate, the primary event in carbon dioxide fixation, as well as the oxidative fragmentation of the pentose substrate in the photorespiration process. Both reactions occur simultaneously and in competition at the same active site. The sequence is that of Ribulose bisphosphate carboxylase large chain from Streptopus lanceolatus (Rose twisted stalk).